Reading from the N-terminus, the 642-residue chain is Threonine--tRNA ligase (642 aa).

The TGS domain maps to 1–61 (MPVITLPDGS…ETDAELSIIT (61 aa)). The segment at 243–534 (DHRKIGKQLD…LIEEYAGRFP (292 aa)) is catalytic. 3 residues coordinate Zn(2+): Cys-334, His-385, and His-511.

The protein belongs to the class-II aminoacyl-tRNA synthetase family. Homodimer. The cofactor is Zn(2+).

Its subcellular location is the cytoplasm. The enzyme catalyses tRNA(Thr) + L-threonine + ATP = L-threonyl-tRNA(Thr) + AMP + diphosphate + H(+). Catalyzes the attachment of threonine to tRNA(Thr) in a two-step reaction: L-threonine is first activated by ATP to form Thr-AMP and then transferred to the acceptor end of tRNA(Thr). Also edits incorrectly charged L-seryl-tRNA(Thr). The sequence is that of Threonine--tRNA ligase from Shewanella baltica (strain OS155 / ATCC BAA-1091).